The chain runs to 332 residues: UDP-3-O-acylglucosamine N-acyltransferase (332 aa).

H231 functions as the Proton acceptor in the catalytic mechanism.

Belongs to the transferase hexapeptide repeat family. LpxD subfamily. As to quaternary structure, homotrimer.

It catalyses the reaction a UDP-3-O-[(3R)-3-hydroxyacyl]-alpha-D-glucosamine + a (3R)-hydroxyacyl-[ACP] = a UDP-2-N,3-O-bis[(3R)-3-hydroxyacyl]-alpha-D-glucosamine + holo-[ACP] + H(+). It functions in the pathway bacterial outer membrane biogenesis; LPS lipid A biosynthesis. Functionally, catalyzes the N-acylation of UDP-3-O-acylglucosamine using 3-hydroxyacyl-ACP as the acyl donor. Is involved in the biosynthesis of lipid A, a phosphorylated glycolipid that anchors the lipopolysaccharide to the outer membrane of the cell. The sequence is that of UDP-3-O-acylglucosamine N-acyltransferase from Vesicomyosocius okutanii subsp. Calyptogena okutanii (strain HA).